We begin with the raw amino-acid sequence, 312 residues long: Acetyl-coenzyme A carboxylase carboxyl transferase subunit alpha (312 aa).

The CoA carboxyltransferase C-terminal domain occupies 25 to 286; the sequence is GDDSAVEILK…GNYIIEKLNE (262 aa).

Belongs to the AccA family. In terms of assembly, acetyl-CoA carboxylase is a heterohexamer composed of biotin carboxyl carrier protein (AccB), biotin carboxylase (AccC) and two subunits each of ACCase subunit alpha (AccA) and ACCase subunit beta (AccD).

The protein localises to the cytoplasm. The enzyme catalyses N(6)-carboxybiotinyl-L-lysyl-[protein] + acetyl-CoA = N(6)-biotinyl-L-lysyl-[protein] + malonyl-CoA. It participates in lipid metabolism; malonyl-CoA biosynthesis; malonyl-CoA from acetyl-CoA: step 1/1. Component of the acetyl coenzyme A carboxylase (ACC) complex. First, biotin carboxylase catalyzes the carboxylation of biotin on its carrier protein (BCCP) and then the CO(2) group is transferred by the carboxyltransferase to acetyl-CoA to form malonyl-CoA. This Campylobacter hominis (strain ATCC BAA-381 / DSM 21671 / CCUG 45161 / LMG 19568 / NCTC 13146 / CH001A) protein is Acetyl-coenzyme A carboxylase carboxyl transferase subunit alpha.